Consider the following 225-residue polypeptide: Phosphatidylserine decarboxylase proenzyme (225 aa).

Catalysis depends on serine 195, which acts as the Schiff-base intermediate with substrate; via pyruvic acid. Pyruvic acid (Ser); by autocatalysis is present on serine 195.

It belongs to the phosphatidylserine decarboxylase family. PSD-A subfamily. As to quaternary structure, heterodimer of a large membrane-associated beta subunit and a small pyruvoyl-containing alpha subunit. It depends on pyruvate as a cofactor. In terms of processing, is synthesized initially as an inactive proenzyme. Formation of the active enzyme involves a self-maturation process in which the active site pyruvoyl group is generated from an internal serine residue via an autocatalytic post-translational modification. Two non-identical subunits are generated from the proenzyme in this reaction, and the pyruvate is formed at the N-terminus of the alpha chain, which is derived from the carboxyl end of the proenzyme. The post-translation cleavage follows an unusual pathway, termed non-hydrolytic serinolysis, in which the side chain hydroxyl group of the serine supplies its oxygen atom to form the C-terminus of the beta chain, while the remainder of the serine residue undergoes an oxidative deamination to produce ammonia and the pyruvoyl prosthetic group on the alpha chain.

Its subcellular location is the cell membrane. It catalyses the reaction a 1,2-diacyl-sn-glycero-3-phospho-L-serine + H(+) = a 1,2-diacyl-sn-glycero-3-phosphoethanolamine + CO2. The protein operates within phospholipid metabolism; phosphatidylethanolamine biosynthesis; phosphatidylethanolamine from CDP-diacylglycerol: step 2/2. In terms of biological role, catalyzes the formation of phosphatidylethanolamine (PtdEtn) from phosphatidylserine (PtdSer). This is Phosphatidylserine decarboxylase proenzyme from Gluconobacter oxydans (strain 621H) (Gluconobacter suboxydans).